Consider the following 640-residue polypeptide: Antigenic protein NP1 (640 aa).

The Peptidase M60 domain occupies 1–288; sequence VQVSIGKCNH…SYVNIAHAFG (288 aa). Residues 463–615 enclose the PA14 domain; the sequence is LDPHQVEYEV…TDQSSVNVSK (153 aa).

The sequence is that of Antigenic protein NP1 from Entamoeba histolytica.